The chain runs to 294 residues: tRNA pseudouridine synthase B (294 aa).

Residue aspartate 39 is the Nucleophile of the active site.

Belongs to the pseudouridine synthase TruB family. Type 1 subfamily.

The catalysed reaction is uridine(55) in tRNA = pseudouridine(55) in tRNA. Responsible for synthesis of pseudouridine from uracil-55 in the psi GC loop of transfer RNAs. In Streptococcus pyogenes serotype M2 (strain MGAS10270), this protein is tRNA pseudouridine synthase B.